Reading from the N-terminus, the 721-residue chain is Polyribonucleotide nucleotidyltransferase (721 aa).

Mg(2+) contacts are provided by Asp486 and Asp492. Positions 553–612 constitute a KH domain; the sequence is PKIVQLQIDIDKISLVIGSTGKTVKAITDEFEVKVQIEQNGKIILFGDDDFKMQKAKERI. The 95-residue stretch at 622 to 716 folds into the S1 motif domain; it reads GEIYEGIVKK…KFGKIDLEVV (95 aa).

The protein belongs to the polyribonucleotide nucleotidyltransferase family. Mg(2+) is required as a cofactor.

The protein resides in the cytoplasm. It carries out the reaction RNA(n+1) + phosphate = RNA(n) + a ribonucleoside 5'-diphosphate. Functionally, involved in mRNA degradation. Catalyzes the phosphorolysis of single-stranded polyribonucleotides processively in the 3'- to 5'-direction. This Borrelia garinii subsp. bavariensis (strain ATCC BAA-2496 / DSM 23469 / PBi) (Borreliella bavariensis) protein is Polyribonucleotide nucleotidyltransferase.